Reading from the N-terminus, the 113-residue chain is T cell receptor alpha variable 36/delta variable 7 (113 aa).

The N-terminal stretch at 1–21 (MMKCPQALLAIFWLLLSWVSS) is a signal peptide. The Ig-like domain occupies 23–113 (DKVVQSPLSL…DSAIYLCAVE (91 aa)). N-linked (GlcNAc...) asparagine glycans are attached at residues asparagine 43 and asparagine 96. Cysteine 44 and cysteine 110 are disulfide-bonded.

As to quaternary structure, alpha-beta TR is a heterodimer composed of an alpha and beta chain; disulfide-linked. The alpha-beta TR is associated with the transmembrane signaling CD3 coreceptor proteins to form the TR-CD3 (TcR or TCR). The assembly of alpha-beta TR heterodimers with CD3 occurs in the endoplasmic reticulum where a single alpha-beta TR heterodimer associates with one CD3D-CD3E heterodimer, one CD3G-CD3E heterodimer and one CD247 homodimer forming a stable octameric structure. CD3D-CD3E and CD3G-CD3E heterodimers preferentially associate with TR alpha and TR beta chains, respectively. The association of the CD247 homodimer is the last step of TcR assembly in the endoplasmic reticulum and is required for transport to the cell surface.

It is found in the cell membrane. In terms of biological role, v region of the variable domain of T cell receptor (TR) alpha chain that participates in the antigen recognition. Alpha-beta T cell receptors are antigen specific receptors which are essential to the immune response and are present on the cell surface of T lymphocytes. Recognize peptide-major histocompatibility (MH) (pMH) complexes that are displayed by antigen presenting cells (APC), a prerequisite for efficient T cell adaptive immunity against pathogens. Binding of alpha-beta TR to pMH complex initiates TR-CD3 clustering on the cell surface and intracellular activation of LCK that phosphorylates the ITAM motifs of CD3G, CD3D, CD3E and CD247 enabling the recruitment of ZAP70. In turn ZAP70 phosphorylates LAT, which recruits numerous signaling molecules to form the LAT signalosome. The LAT signalosome propagates signal branching to three major signaling pathways, the calcium, the mitogen-activated protein kinase (MAPK) kinase and the nuclear factor NF-kappa-B (NF-kB) pathways, leading to the mobilization of transcription factors that are critical for gene expression and essential for T cell growth and differentiation. The T cell repertoire is generated in the thymus, by V-(D)-J rearrangement. This repertoire is then shaped by intrathymic selection events to generate a peripheral T cell pool of self-MH restricted, non-autoaggressive T cells. Post-thymic interaction of alpha-beta TR with the pMH complexes shapes TR structural and functional avidity. The polypeptide is T cell receptor alpha variable 36/delta variable 7 (Homo sapiens (Human)).